We begin with the raw amino-acid sequence, 650 residues long: Putative polypeptide N-acetylgalactosaminyltransferase 9 (650 aa).

The Cytoplasmic segment spans residues 1 to 11 (MAFIWRRRSTT). A helical; Signal-anchor for type II membrane protein transmembrane segment spans residues 12–31 (IVKLVAFALAIWFCIAFLVY). Over 32 to 650 (TDDTRRRAAQ…TLENYDSSKL (619 aa)) the chain is Lumenal. The tract at residues 84–154 (NVIGGGGQKQ…NPGELGKPVR (71 aa)) is disordered. The span at 107-136 (HKADLQAERMRKKAAEQPKKKPQEDSKKVI) shows a compositional bias: basic and acidic residues. 5 cysteine pairs are disulfide-bonded: C198–C432, C423–C499, C535–C554, C577–C590, and C616–C631. Residues 208–317 (LPKTDVIICF…EGWLEPLLDR (110 aa)) form a catalytic subdomain A region. The substrate site is built by C216, D249, and R278. Residue D301 participates in Mn(2+) binding. Substrate contacts are provided by S302 and H303. Mn(2+) is bound at residue H303. 2 N-linked (GlcNAc...) asparagine glycosylation sites follow: N321 and N373. The segment at 378–440 (PVYSPTMAGG…PCSHVGHIFR (63 aa)) is catalytic subdomain B. H437 contacts Mn(2+). Substrate-binding residues include R440 and Y445. In terms of domain architecture, Ricin B-type lectin spans 521–643 (AHGEIRNLGY…SLSRQQWTLE (123 aa)).

The protein belongs to the glycosyltransferase 2 family. GalNAc-T subfamily. As to quaternary structure, isoform A forms homotetramer. Isoform B forms homodimer. The cofactor is Mn(2+).

It localises to the golgi apparatus membrane. The catalysed reaction is L-seryl-[protein] + UDP-N-acetyl-alpha-D-galactosamine = a 3-O-[N-acetyl-alpha-D-galactosaminyl]-L-seryl-[protein] + UDP + H(+). It carries out the reaction L-threonyl-[protein] + UDP-N-acetyl-alpha-D-galactosamine = a 3-O-[N-acetyl-alpha-D-galactosaminyl]-L-threonyl-[protein] + UDP + H(+). It functions in the pathway protein modification; protein glycosylation. Functionally, catalyzes the initial reaction in O-linked oligosaccharide biosynthesis, the transfer of an N-acetyl-D-galactosamine residue to a serine or threonine residue on the protein receptor. It can both act as a peptide transferase that transfers GalNAc onto unmodified peptide substrates, and as a glycopeptide transferase that requires the prior addition of a GalNAc on a peptide before adding additional GalNAc moieties. In terms of biological role, N-acetylgalactosaminyltransferase which preferentially O-glycosylates negatively charge substrates. O-glycosylates mucin-like protein Sgs3 in the salivary gland but to a lesser extent than isoform B. By regulating the O-glycosylation of secretory cargo proteins plays a role in the morphology and maturation of salivary gland secretory granules. N-acetylgalactosaminyltransferase which preferentially O-glycosylates positively charge substrates. O-glycosylates mucin-like protein Sgs3 in the salivary gland. By regulating the O-glycosylation of secretory cargo proteins, plays a role in the morphology and maturation of salivary gland secretory granules. The protein is Putative polypeptide N-acetylgalactosaminyltransferase 9 of Drosophila melanogaster (Fruit fly).